A 464-amino-acid chain; its full sequence is L-cysteine:1D-myo-inositol 2-amino-2-deoxy-alpha-D-glucopyranoside ligase (464 aa).

Cys-67 is a binding site for Zn(2+). Residues 67 to 70 (CGIT), Thr-82, and 105 to 107 (NVT) each bind L-cysteinyl-5'-AMP. Residues 69 to 79 (ITPYDATHLGH) carry the 'HIGH' region motif. Residues 207–212 (ERGGDP) carry the 'ERGGDP' region motif. Residue Trp-247 participates in L-cysteinyl-5'-AMP binding. Cys-251 is a Zn(2+) binding site. 269–271 (GTD) is a binding site for L-cysteinyl-5'-AMP. His-276 serves as a coordination point for Zn(2+). Val-303 lines the L-cysteinyl-5'-AMP pocket. Positions 309 to 313 (KMSKS) match the 'KMSKS' region motif. A disordered region spans residues 410–435 (AGGSAGAGPDPTHQGGPVRGSGGDVP).

It belongs to the class-I aminoacyl-tRNA synthetase family. MshC subfamily. Monomer. It depends on Zn(2+) as a cofactor.

It carries out the reaction 1D-myo-inositol 2-amino-2-deoxy-alpha-D-glucopyranoside + L-cysteine + ATP = 1D-myo-inositol 2-(L-cysteinylamino)-2-deoxy-alpha-D-glucopyranoside + AMP + diphosphate + H(+). Its function is as follows. Catalyzes the ATP-dependent condensation of GlcN-Ins and L-cysteine to form L-Cys-GlcN-Ins. This Frankia casuarinae (strain DSM 45818 / CECT 9043 / HFP020203 / CcI3) protein is L-cysteine:1D-myo-inositol 2-amino-2-deoxy-alpha-D-glucopyranoside ligase.